The sequence spans 85 residues: Large ribosomal subunit protein bL27 (85 aa).

The disordered stretch occupies residues 1 to 21 (MAHKKAGGSTRNGRDSESKRL).

This sequence belongs to the bacterial ribosomal protein bL27 family.

This chain is Large ribosomal subunit protein bL27, found in Pseudomonas putida (strain W619).